A 339-amino-acid polypeptide reads, in one-letter code: Probable scoulerine-9-O-methyltransferase OMT3B (339 aa).

Methionine 161 serves as a coordination point for S-adenosyl-L-methionine. Residue aspartate 164 participates in substrate binding. S-adenosyl-L-methionine-binding positions include threonine 165, glycine 191, aspartate 214, 228–229 (DV), and lysine 242. Position 243 to 247 (243 to 247 (SILHE)) interacts with substrate. The active-site Proton acceptor is the histidine 246.

It belongs to the class I-like SAM-binding methyltransferase superfamily. Cation-independent O-methyltransferase family. COMT subfamily.

It catalyses the reaction (S)-scoulerine + S-adenosyl-L-methionine = (S)-tetrahydrocolumbamine + S-adenosyl-L-homocysteine + H(+). The protein operates within alkaloid biosynthesis. Its function is as follows. Methyltransferase involved in the biosynthesis of the benzylisoquinoline alkaloid noscapine. Catalyzes the conversion of (S)-scoulerine to (S)-tetrahydrocolumbamine. The protein is Probable scoulerine-9-O-methyltransferase OMT3B of Papaver somniferum (Opium poppy).